Consider the following 514-residue polypeptide: MKDFTEQEKIIVLDFGSQYNQLITRRIREFGVYSELHPHTITVEEMKALNPTGIIFSGGPNSVYDEDAFRADERIFDMGIPILGICYGMQLMTTHFGGKVERAKDREYGKADIHVEKPNRLFAGLPTDQVVWMSHGDLVVEEPAGFEVTITSKSCPIAGIADEERSLYGVQFHPEVRHSVYGNELLKNFALNVCGCKGDWTMENFSEVEIAKIQEIVGDKKVLLALSGGVDSSVVGVLIHKAIGDQLTCIFVDHGLLRKGEADQVMATLQGEFNMNIIKVDAKKRFMDKLAGVSDPEQKRKIIGNEFIYVFDDEANKLDGVEFLAQGTLYTDIIESGTATAQTIKSHHNVGGLPEDMQFKLIEPLNTLFKDEVRALGTELGMPDAIVWRQPFPGPGLGIRVLGEITEEKLEIVRDSDYILREEIKNAGLEREIWQYFTALPNIRSVGVMGDGRTYDHTVVVRAVTSIDGMTADWARIPWDVLEKISVRIVNEVDHVNRVVYDITSKPPATVEWE.

A Glutamine amidotransferase type-1 domain is found at 9-199 (KIIVLDFGSQ…ALNVCGCKGD (191 aa)). Cysteine 86 serves as the catalytic Nucleophile. Catalysis depends on residues histidine 173 and glutamate 175. The GMPS ATP-PPase domain occupies 200–389 (WTMENFSEVE…LGMPDAIVWR (190 aa)). Position 227-233 (227-233 (SGGVDSS)) interacts with ATP.

As to quaternary structure, homodimer.

The catalysed reaction is XMP + L-glutamine + ATP + H2O = GMP + L-glutamate + AMP + diphosphate + 2 H(+). It participates in purine metabolism; GMP biosynthesis; GMP from XMP (L-Gln route): step 1/1. In terms of biological role, catalyzes the synthesis of GMP from XMP. The sequence is that of GMP synthase [glutamine-hydrolyzing] from Listeria monocytogenes serotype 4b (strain F2365).